The sequence spans 670 residues: DNA ligase (670 aa).

Residues D33 to D37, S82 to L83, and E114 contribute to the NAD(+) site. Residue K116 is the N6-AMP-lysine intermediate of the active site. NAD(+) is bound by residues R137, E174, K291, and K315. Residues C409, C412, C427, and C433 each coordinate Zn(2+). One can recognise a BRCT domain in the interval D593 to S670.

It belongs to the NAD-dependent DNA ligase family. LigA subfamily. Requires Mg(2+) as cofactor. It depends on Mn(2+) as a cofactor.

It carries out the reaction NAD(+) + (deoxyribonucleotide)n-3'-hydroxyl + 5'-phospho-(deoxyribonucleotide)m = (deoxyribonucleotide)n+m + AMP + beta-nicotinamide D-nucleotide.. DNA ligase that catalyzes the formation of phosphodiester linkages between 5'-phosphoryl and 3'-hydroxyl groups in double-stranded DNA using NAD as a coenzyme and as the energy source for the reaction. It is essential for DNA replication and repair of damaged DNA. The sequence is that of DNA ligase from Vibrio atlanticus (strain LGP32) (Vibrio splendidus (strain Mel32)).